The following is a 188-amino-acid chain: UPF0340 protein BH3766 (188 aa).

Belongs to the UPF0340 family.

This is UPF0340 protein BH3766 from Halalkalibacterium halodurans (strain ATCC BAA-125 / DSM 18197 / FERM 7344 / JCM 9153 / C-125) (Bacillus halodurans).